Reading from the N-terminus, the 256-residue chain is Ribonuclease 3 (256 aa).

In terms of domain architecture, RNase III spans 3-125; the sequence is LDALQQRLGY…IVGAVFLDAG (123 aa). Residue glutamate 38 participates in Mg(2+) binding. Aspartate 42 is a catalytic residue. Mg(2+) is bound by residues aspartate 111 and glutamate 114. The active site involves glutamate 114. A DRBM domain is found at 152–222; sequence DAKTLLQEYL…AKLALDEVQK (71 aa). The tract at residues 230–256 is disordered; it reads RSRAERTGKTRKQPVPQDPQLSLRLKE.

This sequence belongs to the ribonuclease III family. As to quaternary structure, homodimer. Mg(2+) is required as a cofactor.

It is found in the cytoplasm. The enzyme catalyses Endonucleolytic cleavage to 5'-phosphomonoester.. In terms of biological role, digests double-stranded RNA. Involved in the processing of primary rRNA transcript to yield the immediate precursors to the large and small rRNAs (23S and 16S). Processes some mRNAs, and tRNAs when they are encoded in the rRNA operon. Processes pre-crRNA and tracrRNA of type II CRISPR loci if present in the organism. The polypeptide is Ribonuclease 3 (Cupriavidus necator (strain ATCC 17699 / DSM 428 / KCTC 22496 / NCIMB 10442 / H16 / Stanier 337) (Ralstonia eutropha)).